Reading from the N-terminus, the 529-residue chain is Glutamyl-tRNA reductase (529 aa).

47 to 50 (TCNR) contacts substrate. The active-site Nucleophile is the C48. The tract at residues 56–80 (SPRQQAPAPPRPGSAPPPSDEELSR) is disordered. Positions 62 to 73 (PAPPRPGSAPPP) are enriched in pro residues. Substrate is bound by residues S125, 130 to 132 (EPQ), and Q136. Residue 205-210 (GAGDMA) participates in NADP(+) binding. Positions 454 to 505 (RGAVDGPPTPRSARGAAPPASGARGGGSPRHADPRPQAAEDNGVYARQPGGR) are disordered. Residues 464-475 (RSARGAAPPASG) are compositionally biased toward low complexity.

Belongs to the glutamyl-tRNA reductase family. As to quaternary structure, homodimer.

The enzyme catalyses (S)-4-amino-5-oxopentanoate + tRNA(Glu) + NADP(+) = L-glutamyl-tRNA(Glu) + NADPH + H(+). It functions in the pathway porphyrin-containing compound metabolism; protoporphyrin-IX biosynthesis; 5-aminolevulinate from L-glutamyl-tRNA(Glu): step 1/2. Functionally, catalyzes the NADPH-dependent reduction of glutamyl-tRNA(Glu) to glutamate 1-semialdehyde (GSA). The polypeptide is Glutamyl-tRNA reductase (Sorangium cellulosum (strain So ce56) (Polyangium cellulosum (strain So ce56))).